Here is an 86-residue protein sequence, read N- to C-terminus: MKTLLLTLVVVTIVCLDLGYTLTCVKSNSIWFPTSEDCPDGQNLCFKRWQYISPRMYDFTRGCAATCPKAEYRDVINCCGTDKCNK.

An N-terminal signal peptide occupies residues 1–21 (MKTLLLTLVVVTIVCLDLGYT). Finger loop regions lie at residues 23–37 (TCVKSNSIWFPTSED), 44–63 (LCFKRWQYISPRMYDFTRGC), and 66–78 (TCPKAEYRDVINC). 4 disulfide bridges follow: C24/C45, C38/C63, C67/C78, and C79/C84.

This sequence belongs to the three-finger toxin family. Short-chain subfamily. Aminergic toxin sub-subfamily. Expressed by the venom gland.

It localises to the secreted. Functionally, binds specifically and irreversibly to an allosteric site of the muscarinic acetylcholine M1 receptor (CHRM1) at subnanomolar concentrations and shows a very slow dissociation rate. It also inhibits agonist-mediated guanosine 5'-O-(3'-thiotriphosphate) (GTP-g-S) binding and downstream signaling, and decreases the dissociation rate of orthosteric antagonists (N-methylscopolamine (NMS) or pirenzepine). Is a potent negative allosteric modulator (NAM) for CHRM1 activation and a positive allosteric modulator (PAM) for antagonist binding. The sequence is that of Muscarinic toxin 7 from Dendroaspis angusticeps (Eastern green mamba).